Consider the following 174-residue polypeptide: ATP-dependent protease subunit HslV (174 aa).

Residue Thr2 is part of the active site. The Na(+) site is built by Gly157, Cys160, and Thr163.

This sequence belongs to the peptidase T1B family. HslV subfamily. A double ring-shaped homohexamer of HslV is capped on each side by a ring-shaped HslU homohexamer. The assembly of the HslU/HslV complex is dependent on binding of ATP.

The protein resides in the cytoplasm. It carries out the reaction ATP-dependent cleavage of peptide bonds with broad specificity.. With respect to regulation, allosterically activated by HslU binding. Protease subunit of a proteasome-like degradation complex believed to be a general protein degrading machinery. This Yersinia enterocolitica serotype O:8 / biotype 1B (strain NCTC 13174 / 8081) protein is ATP-dependent protease subunit HslV.